We begin with the raw amino-acid sequence, 54 residues long: Photoreceptor disk component PRCD (54 aa).

The S-palmitoyl cysteine moiety is linked to residue cysteine 2. A disordered region spans residues 25–54 (PEPSDVDGAARGSSLDADPQSSGREKEPLK).

It belongs to the PRCD family. Interacts with RHO/rhodopsin; the interaction promotes PRCD stability. In terms of processing, palmitoylated at Cys-2. Palmitoylation is essential for protein stability and trafficking to the photoreceptor outer segment, but does not appear to be essential for membrane localization. Probably palmitoylated by ZDHHC3. Post-translationally, phosphorylated.

Its subcellular location is the cell projection. It localises to the cilium. The protein resides in the photoreceptor outer segment. It is found in the membrane. The protein localises to the endoplasmic reticulum. Its subcellular location is the golgi apparatus. Its function is as follows. Involved in vision. The sequence is that of Photoreceptor disk component PRCD from Homo sapiens (Human).